The chain runs to 413 residues: Tyrosine--tRNA ligase 2 (413 aa).

A 'HIGH' region motif is present at residues 58–67 (PSAPDVHLGH). Repeat copies occupy residues 89 to 94 (GDFTGK) and 96 to 101 (GDPTGK). The segment at 89 to 101 (GDFTGKIGDPTGK) is 2 X 6 AA tandem repeats. The 'KMSKS' region signature appears at 242 to 246 (KMSKS). K245 lines the ATP pocket. Residues 353–413 (IAMIDLLVKL…VGKRKFLKLQ (61 aa)) form the S4 RNA-binding domain.

The protein belongs to the class-I aminoacyl-tRNA synthetase family. TyrS type 2 subfamily. In terms of assembly, homodimer.

It is found in the cytoplasm. It catalyses the reaction tRNA(Tyr) + L-tyrosine + ATP = L-tyrosyl-tRNA(Tyr) + AMP + diphosphate + H(+). Catalyzes the attachment of tyrosine to tRNA(Tyr) in a two-step reaction: tyrosine is first activated by ATP to form Tyr-AMP and then transferred to the acceptor end of tRNA(Tyr). The sequence is that of Tyrosine--tRNA ligase 2 from Bacillus subtilis (strain 168).